The following is a 316-amino-acid chain: MSTVQVPKLNTKDLLTLEELTQEEIISLIEFAIYLKNNKQEPLLQGKILGLIFDKHSTRTRVSFEAGMVQLGGHGMFLSGKEMQMGRGETVSDTAKVLSQYIDGIMIRTFSHADVEELAKESSIPVINGLTDDHHPCQALADLMTIYEEVNTFKGIKLAYVGDGNNVCHSLLLASAKVGMHMTVATPIGYEPNEEIVKKALAIAKETGAEIEILHNPELAVNEADFIYTDVWMSMGQEGEEEKYTLFQPYQINKELVKHAKQTYRFLHCLPAHREEEVTGEIIDGPQSIVFEQAGNRLHAQKALLVSLFKNVEEPS.

Residues 57–60 (STRT), Gln-84, Arg-108, and 135–138 (HPCQ) contribute to the carbamoyl phosphate site. L-ornithine-binding positions include Asn-166, Asp-230, and 234–235 (SM). Residues 269-270 (CL) and Arg-297 contribute to the carbamoyl phosphate site.

It belongs to the aspartate/ornithine carbamoyltransferase superfamily. OTCase family.

Its subcellular location is the cytoplasm. The enzyme catalyses carbamoyl phosphate + L-ornithine = L-citrulline + phosphate + H(+). The protein operates within amino-acid biosynthesis; L-arginine biosynthesis; L-arginine from L-ornithine and carbamoyl phosphate: step 1/3. Its function is as follows. Reversibly catalyzes the transfer of the carbamoyl group from carbamoyl phosphate (CP) to the N(epsilon) atom of ornithine (ORN) to produce L-citrulline. The sequence is that of Ornithine carbamoyltransferase from Bacillus cereus (strain ZK / E33L).